The chain runs to 258 residues: Synapse differentiation-inducing gene protein 1 (258 aa).

The Cytoplasmic segment spans residues 1 to 181 (MDGIIEQKSM…NFLMMPPRDH (181 aa)). Ser-137 bears the Phosphoserine mark. The chain crosses the membrane as a helical span at residues 182 to 202 (LGLSVFSMLCCFWPLGIAAFY). The Extracellular segment spans residues 203–228 (LSHETNKAVAKGDLHQASTSSRRALF). Residues 229 to 249 (LAVLSITIGTGVYVGVAVALI) constitute an intramembrane region (helical). The Extracellular portion of the chain corresponds to 250–258 (AYLSKNNHL).

This sequence belongs to the CD225/Dispanin family. As to quaternary structure, homodimer. Interacts with GRIA1 and GRIA2.

The protein localises to the cell membrane. It is found in the early endosome membrane. The protein resides in the postsynaptic density membrane. It localises to the synapse. Its subcellular location is the cell projection. The protein localises to the dendrite. It is found in the dendritic spine. Its function is as follows. May regulate AMPA receptor content at nascent synapses, and have a role in postsynaptic development and maturation. The polypeptide is Synapse differentiation-inducing gene protein 1 (SYNDIG1) (Homo sapiens (Human)).